Consider the following 160-residue polypeptide: Endoribonuclease YbeY (160 aa).

Positions 124, 128, and 134 each coordinate Zn(2+).

This sequence belongs to the endoribonuclease YbeY family. Zn(2+) is required as a cofactor.

It localises to the cytoplasm. Single strand-specific metallo-endoribonuclease involved in late-stage 70S ribosome quality control and in maturation of the 3' terminus of the 16S rRNA. In Jannaschia sp. (strain CCS1), this protein is Endoribonuclease YbeY.